The following is a 507-amino-acid chain: ATP synthase subunit alpha, chloroplastic (507 aa).

170-177 (GDRQTGKT) provides a ligand contact to ATP.

Belongs to the ATPase alpha/beta chains family. F-type ATPases have 2 components, CF(1) - the catalytic core - and CF(0) - the membrane proton channel. CF(1) has five subunits: alpha(3), beta(3), gamma(1), delta(1), epsilon(1). CF(0) has four main subunits: a, b, b' and c.

The protein localises to the plastid. The protein resides in the chloroplast thylakoid membrane. The catalysed reaction is ATP + H2O + 4 H(+)(in) = ADP + phosphate + 5 H(+)(out). Its function is as follows. Produces ATP from ADP in the presence of a proton gradient across the membrane. The alpha chain is a regulatory subunit. This chain is ATP synthase subunit alpha, chloroplastic, found in Manihot esculenta (Cassava).